The chain runs to 111 residues: ATP-dependent Clp protease adapter protein ClpS (111 aa).

This sequence belongs to the ClpS family. Binds to the N-terminal domain of the chaperone ClpA.

Involved in the modulation of the specificity of the ClpAP-mediated ATP-dependent protein degradation. The sequence is that of ATP-dependent Clp protease adapter protein ClpS from Leptospira interrogans serogroup Icterohaemorrhagiae serovar copenhageni (strain Fiocruz L1-130).